Reading from the N-terminus, the 429-residue chain is 26S proteasome regulatory subunit 6A homolog (429 aa).

The segment at 1–21 is disordered; sequence MSSPPPAAAAAMAVDDADDDQ. 217–224 contributes to the ATP binding site; it reads GPPGTGKT.

The protein belongs to the AAA ATPase family.

The protein localises to the cytoplasm. Its subcellular location is the nucleus. The 26S proteasome is involved in the ATP-dependent degradation of ubiquitinated proteins. The regulatory (or ATPase) complex confers ATP dependency and substrate specificity to the 26S complex. The sequence is that of 26S proteasome regulatory subunit 6A homolog (TBP1) from Oryza sativa subsp. japonica (Rice).